The primary structure comprises 553 residues: Dihydroxy-acid dehydratase (553 aa).

Asp-78 serves as a coordination point for Mg(2+). Cys-119 serves as a coordination point for [2Fe-2S] cluster. 2 residues coordinate Mg(2+): Asp-120 and Lys-121. An N6-carboxylysine modification is found at Lys-121. Cys-192 is a [2Fe-2S] cluster binding site. Residue Glu-442 participates in Mg(2+) binding. The active-site Proton acceptor is Ser-468.

This sequence belongs to the IlvD/Edd family. Homodimer. The cofactor is [2Fe-2S] cluster. It depends on Mg(2+) as a cofactor.

The enzyme catalyses (2R)-2,3-dihydroxy-3-methylbutanoate = 3-methyl-2-oxobutanoate + H2O. It catalyses the reaction (2R,3R)-2,3-dihydroxy-3-methylpentanoate = (S)-3-methyl-2-oxopentanoate + H2O. It participates in amino-acid biosynthesis; L-isoleucine biosynthesis; L-isoleucine from 2-oxobutanoate: step 3/4. It functions in the pathway amino-acid biosynthesis; L-valine biosynthesis; L-valine from pyruvate: step 3/4. Its function is as follows. Functions in the biosynthesis of branched-chain amino acids. Catalyzes the dehydration of (2R,3R)-2,3-dihydroxy-3-methylpentanoate (2,3-dihydroxy-3-methylvalerate) into 2-oxo-3-methylpentanoate (2-oxo-3-methylvalerate) and of (2R)-2,3-dihydroxy-3-methylbutanoate (2,3-dihydroxyisovalerate) into 2-oxo-3-methylbutanoate (2-oxoisovalerate), the penultimate precursor to L-isoleucine and L-valine, respectively. This is Dihydroxy-acid dehydratase from Campylobacter hominis (strain ATCC BAA-381 / DSM 21671 / CCUG 45161 / LMG 19568 / NCTC 13146 / CH001A).